Reading from the N-terminus, the 133-residue chain is NADPH-dependent 7-cyano-7-deazaguanine reductase (133 aa).

Cys-49 serves as the catalytic Thioimide intermediate. Asp-56 (proton donor) is an active-site residue. Residues 71–73 (IEL) and 90–91 (HE) contribute to the substrate site.

The protein belongs to the GTP cyclohydrolase I family. QueF type 1 subfamily.

Its subcellular location is the cytoplasm. It catalyses the reaction 7-aminomethyl-7-carbaguanine + 2 NADP(+) = 7-cyano-7-deazaguanine + 2 NADPH + 3 H(+). Its pathway is tRNA modification; tRNA-queuosine biosynthesis. Catalyzes the NADPH-dependent reduction of 7-cyano-7-deazaguanine (preQ0) to 7-aminomethyl-7-deazaguanine (preQ1). The protein is NADPH-dependent 7-cyano-7-deazaguanine reductase of Leptospira borgpetersenii serovar Hardjo-bovis (strain JB197).